The primary structure comprises 208 residues: Thymidylate kinase (208 aa).

11-18 contributes to the ATP binding site; the sequence is GTEGVGKT.

The protein belongs to the thymidylate kinase family.

The catalysed reaction is dTMP + ATP = dTDP + ADP. In terms of biological role, phosphorylation of dTMP to form dTDP in both de novo and salvage pathways of dTTP synthesis. This chain is Thymidylate kinase, found in Psychrobacter sp. (strain PRwf-1).